Here is a 159-residue protein sequence, read N- to C-terminus: Neuroglobin (159 aa).

One can recognise a Globin domain in the interval 3-151; that stretch reads KLSEKDKGLI…VVSAMTRGWA (149 aa). Positions 66 and 98 each coordinate heme b.

The protein belongs to the globin family. As to quaternary structure, monomer. Homodimers and homotetramers. Mainly monomeric but also detected as part of homodimers and homotetramers. In terms of tissue distribution, detected in brain, eye and gill, but not in muscle and blood (at protein level). Particularly high expression in the periventral zone of tectum opticum, with significant expression detected in white matter, preglomerular nucleus, posterior tubular nucleus, torus longitudinalis, hypothalamus, pituitary gland, posterior tuberculum, hypothalamus, synencephalon and formatio reticularis. Detected also in brain regions of the visual system, predominantly in parts of tectum opticum and torus semicircularis, area dorsalis telencephali and medulla oblongata. Strong expression observed in sensory epithelium of peripheral olfactory organ, and outer and inner nuclear layers and ganglion cell layer of retina.

The protein localises to the cytoplasm. It localises to the cytosol. It is found in the mitochondrion matrix. The catalysed reaction is Fe(III)-heme b-[protein] + nitric oxide + H2O = Fe(II)-heme b-[protein] + nitrite + 2 H(+). Functionally, monomeric globin with a bis-histidyl six-coordinate heme-iron atom through which it can bind dioxygen, carbon monoxide and nitric oxide. Could help transport oxygen and increase its availability to the metabolically active neuronal tissues, though its low quantity in tissues as well as its high affinity for dioxygen, which may limit its oxygen-releasing ability, argue against it. The ferrous/deoxygenated form exhibits a nitrite reductase activity and it could produce nitric oxide which in turn inhibits cellular respiration in response to hypoxia. In its ferrous/deoxygenated state, it may also exhibit GDI (Guanine nucleotide Dissociation Inhibitor) activity toward heterotrimeric G-alpha proteins, thereby regulating signal transduction to facilitate neuroprotective responses in the wake of hypoxia and associated oxidative stress. The polypeptide is Neuroglobin (ngb) (Danio rerio (Zebrafish)).